Consider the following 233-residue polypeptide: Tapetum-specific methyltransferase 1 (233 aa).

Lys-8 contributes to the substrate binding site. S-adenosyl-L-methionine-binding positions include Val-52, Glu-74, 76-77 (GV), Ser-82, Asp-100, and Ala-129. Position 150 (Asp-150) interacts with substrate. Position 150 (Asp-150) interacts with a divalent metal cation. An S-adenosyl-L-methionine-binding site is contributed by Asp-152. A divalent metal cation-binding residues include Asp-176 and Asn-177.

The protein belongs to the class I-like SAM-binding methyltransferase superfamily. Cation-dependent O-methyltransferase family. CCoAMT subfamily. A divalent metal cation is required as a cofactor. As to expression, expressed in inflorescences and flower buds. Not detected in roots, leaves or stems. Located exclusively in the tapetum of developing stamen.

It participates in aromatic compound metabolism; phenylpropanoid biosynthesis. In terms of biological role, methyltransferase involved in phenylpropanoid polyamine conjugate biosynthesis. In vivo, methylates only one of the 5-hydroxyferuloyl moieties of N1,N5,N10-tri-(hydroxyferuloyl)-spermidine, while is able in vitro to convert all three 5-hydroxyferuloyl residues to the corresponding sinapoyl moieties and to methylate caffeoyl CoA and tricaffeoyl spermidine. In Arabidopsis thaliana (Mouse-ear cress), this protein is Tapetum-specific methyltransferase 1 (TSM1).